The chain runs to 53 residues: Photosystem II reaction center protein K (53 aa).

A propeptide spanning residues 1 to 16 (MLKFYLENVFHLIFFA) is cleaved from the precursor. Residues 28-48 (IVNVMPIIPLFFFLLAFVWQA) traverse the membrane as a helical segment.

Belongs to the PsbK family. As to quaternary structure, PSII is composed of 1 copy each of membrane proteins PsbA, PsbB, PsbC, PsbD, PsbE, PsbF, PsbH, PsbI, PsbJ, PsbK, PsbL, PsbM, PsbT, PsbX, PsbY, PsbZ, Psb30/Ycf12, at least 3 peripheral proteins of the oxygen-evolving complex and a large number of cofactors. It forms dimeric complexes.

The protein localises to the plastid. The protein resides in the chloroplast thylakoid membrane. Its function is as follows. One of the components of the core complex of photosystem II (PSII). PSII is a light-driven water:plastoquinone oxidoreductase that uses light energy to abstract electrons from H(2)O, generating O(2) and a proton gradient subsequently used for ATP formation. It consists of a core antenna complex that captures photons, and an electron transfer chain that converts photonic excitation into a charge separation. The polypeptide is Photosystem II reaction center protein K (Huperzia lucidula (Shining clubmoss)).